We begin with the raw amino-acid sequence, 206 residues long: Ribosomal RNA large subunit methyltransferase E (206 aa).

5 residues coordinate S-adenosyl-L-methionine: Gly54, Trp56, Asp76, Asp94, and Asp118. The Proton acceptor role is filled by Lys158.

It belongs to the class I-like SAM-binding methyltransferase superfamily. RNA methyltransferase RlmE family.

It localises to the cytoplasm. It carries out the reaction uridine(2552) in 23S rRNA + S-adenosyl-L-methionine = 2'-O-methyluridine(2552) in 23S rRNA + S-adenosyl-L-homocysteine + H(+). In terms of biological role, specifically methylates the uridine in position 2552 of 23S rRNA at the 2'-O position of the ribose in the fully assembled 50S ribosomal subunit. The polypeptide is Ribosomal RNA large subunit methyltransferase E (Methanosphaera stadtmanae (strain ATCC 43021 / DSM 3091 / JCM 11832 / MCB-3)).